The sequence spans 1034 residues: Ubiquitin-like-specific protease 2 (1034 aa).

6 disordered regions span residues M1–D42, I71–L110, S388–T419, I731–H800, G841–G960, and S983–P1034. The span at S19–P33 shows a compositional bias: low complexity. Over residues S74–E85 the composition is skewed to acidic residues. Residues T743–T756 are compositionally biased toward low complexity. Residue S788 is modified to Phosphoserine. Polar residues-rich tracts occupy residues P845–H856, Q876–D904, and G912–I923. S903 is modified (phosphoserine). Phosphoserine occurs at positions 983 and 984. Positions T992–S1017 are enriched in polar residues.

The protein belongs to the peptidase C48 family.

In terms of biological role, insertion mutation in SMT4 confers temperature and benomyl sensitivity; high copy suppressor of a temperature sensitive mutation in MIF2. This chain is Ubiquitin-like-specific protease 2 (ULP2), found in Saccharomyces cerevisiae (strain ATCC 204508 / S288c) (Baker's yeast).